The chain runs to 329 residues: Ribosomal RNA small subunit methyltransferase C (329 aa).

The protein belongs to the methyltransferase superfamily. RsmC family. Monomer.

The protein localises to the cytoplasm. It carries out the reaction guanosine(1207) in 16S rRNA + S-adenosyl-L-methionine = N(2)-methylguanosine(1207) in 16S rRNA + S-adenosyl-L-homocysteine + H(+). Specifically methylates the guanine in position 1207 of 16S rRNA in the 30S particle. This chain is Ribosomal RNA small subunit methyltransferase C, found in Haemophilus ducreyi (strain 35000HP / ATCC 700724).